A 104-amino-acid polypeptide reads, in one-letter code: Large ribosomal subunit protein bL21 (104 aa).

Belongs to the bacterial ribosomal protein bL21 family. Part of the 50S ribosomal subunit. Contacts protein L20.

In terms of biological role, this protein binds to 23S rRNA in the presence of protein L20. The protein is Large ribosomal subunit protein bL21 of Acidiphilium cryptum (strain JF-5).